We begin with the raw amino-acid sequence, 568 residues long: Putative U-box domain-containing protein 55 (568 aa).

Residues glutamine 217–serine 464 are a coiled coil. A U-box domain is found at glutamine 496–serine 568.

The enzyme catalyses S-ubiquitinyl-[E2 ubiquitin-conjugating enzyme]-L-cysteine + [acceptor protein]-L-lysine = [E2 ubiquitin-conjugating enzyme]-L-cysteine + N(6)-ubiquitinyl-[acceptor protein]-L-lysine.. The protein operates within protein modification; protein ubiquitination. Functions as an E3 ubiquitin ligase. This is Putative U-box domain-containing protein 55 (PUB55) from Arabidopsis thaliana (Mouse-ear cress).